The sequence spans 728 residues: Catalase-peroxidase (728 aa).

The disordered stretch occupies residues 1–26; that stretch reads MDNPTDTAGKCPVAHGNKPRGPSNRD. A cross-link (tryptophyl-tyrosyl-methioninium (Trp-Tyr) (with M-244)) is located at residues 96 to 218; sequence WHSAGTYRIT…LGAVQMGLIY (123 aa). The Proton acceptor role is filled by His97. A cross-link (tryptophyl-tyrosyl-methioninium (Tyr-Met) (with W-96)) is located at residues 218-244; it reads YVNPEGPNGNPDPVAAARDIRETFARM. His259 is a heme b binding site.

This sequence belongs to the peroxidase family. Peroxidase/catalase subfamily. As to quaternary structure, homodimer or homotetramer. Requires heme b as cofactor. Formation of the three residue Trp-Tyr-Met cross-link is important for the catalase, but not the peroxidase activity of the enzyme.

It catalyses the reaction H2O2 + AH2 = A + 2 H2O. The enzyme catalyses 2 H2O2 = O2 + 2 H2O. Its function is as follows. Bifunctional enzyme with both catalase and broad-spectrum peroxidase activity. Important for stationary phase survival. This Rhizobium etli (strain ATCC 51251 / DSM 11541 / JCM 21823 / NBRC 15573 / CFN 42) protein is Catalase-peroxidase.